The chain runs to 699 residues: Elongation factor G (699 aa).

In terms of domain architecture, tr-type G spans 8-288 (EDYRNFGIMA…AVVDYLPSPL (281 aa)). Residues 17–24 (AHIDAGKT), 86–90 (DTPGH), and 140–143 (NKMD) each bind GTP.

Belongs to the TRAFAC class translation factor GTPase superfamily. Classic translation factor GTPase family. EF-G/EF-2 subfamily.

The protein localises to the cytoplasm. Catalyzes the GTP-dependent ribosomal translocation step during translation elongation. During this step, the ribosome changes from the pre-translocational (PRE) to the post-translocational (POST) state as the newly formed A-site-bound peptidyl-tRNA and P-site-bound deacylated tRNA move to the P and E sites, respectively. Catalyzes the coordinated movement of the two tRNA molecules, the mRNA and conformational changes in the ribosome. This chain is Elongation factor G, found in Agrobacterium fabrum (strain C58 / ATCC 33970) (Agrobacterium tumefaciens (strain C58)).